A 293-amino-acid polypeptide reads, in one-letter code: DNA-directed RNA polymerase III subunit RPC6 (293 aa).

It belongs to the eukaryotic RPC34/RPC39 RNA polymerase subunit family. As to quaternary structure, component of the RNA polymerase III (Pol III) complex consisting of 17 subunits.

It is found in the nucleus. Its function is as follows. DNA-dependent RNA polymerase catalyzes the transcription of DNA into RNA using the four ribonucleoside triphosphates as substrates. Specific peripheric component of RNA polymerase III which synthesizes small RNAs, such as 5S rRNA and tRNAs. This is DNA-directed RNA polymerase III subunit RPC6 from Drosophila melanogaster (Fruit fly).